The sequence spans 105 residues: Small ribosomal subunit protein uS10 (105 aa).

It belongs to the universal ribosomal protein uS10 family. In terms of assembly, part of the 30S ribosomal subunit.

Functionally, involved in the binding of tRNA to the ribosomes. The polypeptide is Small ribosomal subunit protein uS10 (Trichodesmium erythraeum (strain IMS101)).